A 306-amino-acid chain; its full sequence is tRNA-cytidine(32) 2-sulfurtransferase (306 aa).

The tract at residues Met1–Gln25 is disordered. A compositionally biased stretch (basic and acidic residues) spans Ala14–Gln25. The PP-loop motif motif lies at Ser57–Ser62. Positions 132, 135, and 223 each coordinate [4Fe-4S] cluster. Positions Ala286–Val306 are disordered. Over residues Ala297–Val306 the composition is skewed to acidic residues.

This sequence belongs to the TtcA family. In terms of assembly, homodimer. Mg(2+) is required as a cofactor. It depends on [4Fe-4S] cluster as a cofactor.

It is found in the cytoplasm. The catalysed reaction is cytidine(32) in tRNA + S-sulfanyl-L-cysteinyl-[cysteine desulfurase] + AH2 + ATP = 2-thiocytidine(32) in tRNA + L-cysteinyl-[cysteine desulfurase] + A + AMP + diphosphate + H(+). It functions in the pathway tRNA modification. Catalyzes the ATP-dependent 2-thiolation of cytidine in position 32 of tRNA, to form 2-thiocytidine (s(2)C32). The sulfur atoms are provided by the cysteine/cysteine desulfurase (IscS) system. This is tRNA-cytidine(32) 2-sulfurtransferase from Stenotrophomonas maltophilia (strain K279a).